A 288-amino-acid polypeptide reads, in one-letter code: Diaminopimelate epimerase (288 aa).

Substrate-binding residues include Asn14 and Asn67. The active-site Proton donor is the Cys76. Residues Gly77 to Asn78, Asn166, Asn199, and Glu217 to Arg218 each bind substrate. Cys226 serves as the catalytic Proton acceptor. Residue Gly227–Thr228 participates in substrate binding.

This sequence belongs to the diaminopimelate epimerase family. Homodimer.

It is found in the cytoplasm. The catalysed reaction is (2S,6S)-2,6-diaminopimelate = meso-2,6-diaminopimelate. It functions in the pathway amino-acid biosynthesis; L-lysine biosynthesis via DAP pathway; DL-2,6-diaminopimelate from LL-2,6-diaminopimelate: step 1/1. Its function is as follows. Catalyzes the stereoinversion of LL-2,6-diaminopimelate (L,L-DAP) to meso-diaminopimelate (meso-DAP), a precursor of L-lysine and an essential component of the bacterial peptidoglycan. The chain is Diaminopimelate epimerase from Bacillus cereus (strain B4264).